Here is a 447-residue protein sequence, read N- to C-terminus: MTRKLFGTDGVRGTANTHPMTAEMALRLGAAAGRYFRPVGAGSPRVVIGKDTRLSGYMLENALTAGLTSTGMNVLLLGPVPTPAVGFLTRSMRAALGVMISASHNPHEDNGIKFFGPDGFKLSDEAEAEIEAILAGEIQPAQPGNIGRAKRIEDGRGRYQEYCKTTFPSGLRLDGLKVVIDCANGAAYRAAPEVLWELGAEVIPVGVEPNGKNINLRCGSTHPEAAAEAVRAHGADVGICLDGDADRVIILDETGKEADGDQIMALFAARWADEGRLRDGTLVATVMSNLGLERFLGARGLRLERTPVGDRYVVEAMRRGGWNLGGEQSGHIVMTDFATTGDGLLAGLQFLAAMAQTGRRASDLARSFETVPQLLQNVRYAAGQEPLKAPGVQAVIRDAEVRLNGAGRLLIRKSGTEPLIRVMAECEDEALLRDVVEEIVAAVRDAA.

The active-site Phosphoserine intermediate is the serine 103. The Mg(2+) site is built by serine 103, aspartate 242, aspartate 244, and aspartate 246. A Phosphoserine modification is found at serine 103.

This sequence belongs to the phosphohexose mutase family. Mg(2+) serves as cofactor. In terms of processing, activated by phosphorylation.

The enzyme catalyses alpha-D-glucosamine 1-phosphate = D-glucosamine 6-phosphate. Functionally, catalyzes the conversion of glucosamine-6-phosphate to glucosamine-1-phosphate. In Cereibacter sphaeroides (strain ATCC 17029 / ATH 2.4.9) (Rhodobacter sphaeroides), this protein is Phosphoglucosamine mutase.